A 104-amino-acid polypeptide reads, in one-letter code: Large ribosomal subunit protein uL24 (104 aa).

This sequence belongs to the universal ribosomal protein uL24 family. As to quaternary structure, part of the 50S ribosomal subunit.

One of two assembly initiator proteins, it binds directly to the 5'-end of the 23S rRNA, where it nucleates assembly of the 50S subunit. In terms of biological role, one of the proteins that surrounds the polypeptide exit tunnel on the outside of the subunit. This Clostridium beijerinckii (strain ATCC 51743 / NCIMB 8052) (Clostridium acetobutylicum) protein is Large ribosomal subunit protein uL24.